The chain runs to 612 residues: MAAVVQQNDLVFEFASNGMEDEQQLGDPAIFPAVIVEHVPGADILNSYAGLACVEEPNDMITESSLDVAEEEIIDDDDDDITLTVEASCHNGDETIETIEAAEALLNIDSPSPPVLDEKQINNNIFSSSEDDIVAPITHVSVTLDGIPEVMETQQVQETNADSPGASSPEQRKRKKGRKTKPPRPDSPTTTPNISVKKKNKDGKGNTIYLWEFLLALLQDKATCPKYIKWTQREKGIFKLVDSKAVSRLWGKHKNKPDMNYETMGRALRYYYQRGILAKVEGQRLVYQFKEMPKDLIYIDDEDPSSSIESSDQSLSSTTASSRNQANRSRVSSSPGIKGGAATILKPGNSKAANPKDPVEVGQPSEVLRTVQPSQAPYPTQLFRTVHVVQPVQAVPEEATIASTMQEEAANSSVPSIRTIQASTQVPVVVSPGNQQLHTVTVPLTTVIASIDPSSGAGSQKFILQTIPSSQPMTVLKENVMLQSQKPGSPSIVLSPTQVQQVLTSNVQSICNGAGSVASAPSFSATTPVVTFSRSSQLVAHPPGTVITSVIKAQETKTLKQEVEKKAEDDLNEDAEKSAQQPQPYVMVLSSSNGFSSQVAVKQNELLEPNSF.

Phosphoserine is present on residues serine 110, serine 163, serine 167, and serine 168. Over residues 156–169 (VQETNADSPGASSP) the composition is skewed to polar residues. Residues 156–199 (VQETNADSPGASSPEQRKRKKGRKTKPPRPDSPTTTPNISVKKK) are disordered. Over residues 172–182 (RKRKKGRKTKP) the composition is skewed to basic residues. Serine 187 carries the post-translational modification Phosphoserine. A Phosphothreonine modification is found at threonine 190. Residues 208 to 290 (IYLWEFLLAL…EGQRLVYQFK (83 aa)) constitute a DNA-binding region (ETS). Residues 300 to 361 (DDEDPSSSIE…AANPKDPVEV (62 aa)) are disordered. Positions 305–322 (SSSIESSDQSLSSTTASS) are enriched in low complexity. A compositionally biased stretch (polar residues) spans 323–335 (RNQANRSRVSSSP). Position 431 is a phosphoserine (serine 431). Basic and acidic residues predominate over residues 562–577 (EVEKKAEDDLNEDAEK). The tract at residues 562–586 (EVEKKAEDDLNEDAEKSAQQPQPYV) is disordered.

Belongs to the ETS family. Binds to the underphosphorylated form of RB. May interact with other transcription factors in order to regulate specific genes. Interacts with RUNX1. Interacts with SP1; the interaction is inhibited by glycosylation of SP1. As to expression, predominantly found in hematopoietic cells. Detected in other cell types such as fibroblasts.

It localises to the nucleus. In terms of biological role, transcription factor that activates the LYN and BLK promoters. The chain is ETS-related transcription factor Elf-1 (Elf1) from Mus musculus (Mouse).